The chain runs to 63 residues: Probable rubredoxin (63 aa).

The 52-residue stretch at 11-62 (MKRYKCRVCGYIYDPEKGEPRTDTPPGTPFEDLPETWRCPSCGAKKKMFKPL) folds into the Rubredoxin-like domain. Positions 16, 19, 49, and 52 each coordinate Fe cation.

Belongs to the rubredoxin family. It depends on Fe(3+) as a cofactor.

In terms of biological role, rubredoxin is a small nonheme, iron protein lacking acid-labile sulfide. Its single Fe, chelated to 4 Cys, functions as an electron acceptor and may also stabilize the conformation of the molecule. This chain is Probable rubredoxin, found in Methanothermobacter thermautotrophicus (strain ATCC 29096 / DSM 1053 / JCM 10044 / NBRC 100330 / Delta H) (Methanobacterium thermoautotrophicum).